Consider the following 227-residue polypeptide: Orotidine 5'-phosphate decarboxylase (227 aa).

Substrate is bound by residues Asp8, Lys30, 59–68 (DLKLYDIPYT), Thr118, Arg178, Gln187, Gly207, and Arg208. Lys61 functions as the Proton donor in the catalytic mechanism.

This sequence belongs to the OMP decarboxylase family. Type 1 subfamily. As to quaternary structure, homodimer.

The catalysed reaction is orotidine 5'-phosphate + H(+) = UMP + CO2. Its pathway is pyrimidine metabolism; UMP biosynthesis via de novo pathway; UMP from orotate: step 2/2. Catalyzes the decarboxylation of orotidine 5'-monophosphate (OMP) to uridine 5'-monophosphate (UMP). The protein is Orotidine 5'-phosphate decarboxylase of Helicobacter pylori (strain J99 / ATCC 700824) (Campylobacter pylori J99).